The chain runs to 54 residues: Large ribosomal subunit protein bL33C (54 aa).

It belongs to the bacterial ribosomal protein bL33 family.

This chain is Large ribosomal subunit protein bL33C, found in Streptomyces griseus subsp. griseus (strain JCM 4626 / CBS 651.72 / NBRC 13350 / KCC S-0626 / ISP 5235).